We begin with the raw amino-acid sequence, 921 residues long: Levanase (921 aa).

Positions 1 to 23 (MMKWFAKLILSLSLAVVMAASSA) are cleaved as a signal peptide. Residues 409 to 412 (SASD), glutamine 428, 460 to 461 (WS), 539 to 540 (RD), glutamate 591, and tryptophan 679 each bind substrate. Aspartate 412 is a catalytic residue.

This sequence belongs to the glycosyl hydrolase 32 family.

It is found in the secreted. It carries out the reaction Random hydrolysis of (2-&gt;6)-beta-D-fructofuranosidic linkages in (2-&gt;6)-beta-D-fructans (levans) containing more than 3 fructose units.. Its activity is regulated as follows. Is completely inhibited by low concentrations of heavy metal ions, while Ca(2+) and Mg(2+) or chelating agents such as EDTA neither inhibit nor activate the enzyme to any significant extent. In terms of biological role, catalyzes the hydrolysis of levan with endo-type specificity. The products of levan hydrolysis are a mixture of fructose and a series of fructooligosaccharides up to 12-mer, with levantriose being the major oligosaccharide obtained. Is not active towards sucrose. This is Levanase from Bacillus sp. (strain L7).